A 391-amino-acid chain; its full sequence is MSRFLICSFALVLLYPAGIDMYLVGLPRIAADLNASEAQLHIAFSVYLAGMAAAMLFAGKMADRSGRKPVAIPGSALFIIASVFCSLAETSTLFLAGRFLQGLGAGCCYVVAFAILRDTLDDRRRAKVLSLLNGITCIIPVLAPVLGHLIMLKFPWQSLFWAMAMMGIAVLMLSLFILKETRPASPAASDKPRENSESLLNRFFLSRVVITTLSVSVILTFVNTSPVLLMEIMGFERGEYATIMALTAGVSMTFSFSTPFALGIFKPRTLMITSQVLFLAAGITLAVSPSHAVSLFGITLICAGFSVGFGVAMSQALGPFSLRAGVASSTLGIAQVCGSSLWIWLAAVVGIGAWNMLIGILIACSIVSLLLIMFVAPGRPVAAHEEIHHHA.

Over 1–3 (MSR) the chain is Cytoplasmic. The chain crosses the membrane as a helical span at residues 4–24 (FLICSFALVLLYPAGIDMYLV). Residues 25-37 (GLPRIAADLNASE) lie on the Periplasmic side of the membrane. Residues 38–58 (AQLHIAFSVYLAGMAAAMLFA) traverse the membrane as a helical segment. Residues 59–75 (GKMADRSGRKPVAIPGS) lie on the Cytoplasmic side of the membrane. A helical membrane pass occupies residues 76-96 (ALFIIASVFCSLAETSTLFLA). Residues 97–98 (GR) lie on the Periplasmic side of the membrane. Residues 99-119 (FLQGLGAGCCYVVAFAILRDT) form a helical membrane-spanning segment. Over 120 to 130 (LDDRRRAKVLS) the chain is Cytoplasmic. Residues 131–151 (LLNGITCIIPVLAPVLGHLIM) form a helical membrane-spanning segment. Residues 152–157 (LKFPWQ) lie on the Periplasmic side of the membrane. The chain crosses the membrane as a helical span at residues 158–178 (SLFWAMAMMGIAVLMLSLFIL). The Cytoplasmic portion of the chain corresponds to 179–202 (KETRPASPAASDKPRENSESLLNR). A helical membrane pass occupies residues 203–222 (FFLSRVVITTLSVSVILTFV). The Periplasmic segment spans residues 223-244 (NTSPVLLMEIMGFERGEYATIM). The chain crosses the membrane as a helical span at residues 245–265 (ALTAGVSMTFSFSTPFALGIF). Over 266 to 268 (KPR) the chain is Cytoplasmic. Residues 269–289 (TLMITSQVLFLAAGITLAVSP) form a helical membrane-spanning segment. At 290 to 292 (SHA) the chain is on the periplasmic side. A helical membrane pass occupies residues 293 to 313 (VSLFGITLICAGFSVGFGVAM). The Cytoplasmic segment spans residues 314–330 (SQALGPFSLRAGVASST). The helical transmembrane segment at 331-351 (LGIAQVCGSSLWIWLAAVVGI) threads the bilayer. Over 352 to 355 (GAWN) the chain is Periplasmic. The chain crosses the membrane as a helical span at residues 356 to 376 (MLIGILIACSIVSLLLIMFVA). Topologically, residues 377 to 391 (PGRPVAAHEEIHHHA) are cytoplasmic.

This sequence belongs to the major facilitator superfamily. DHA1 family. MdtL (TC 2.A.1.2.22) subfamily.

Its subcellular location is the cell inner membrane. This Shigella flexneri serotype 5b (strain 8401) protein is Multidrug resistance protein MdtL.